A 505-amino-acid chain; its full sequence is Lysine--tRNA ligase (505 aa).

Residues glutamate 415 and glutamate 422 each coordinate Mg(2+).

Belongs to the class-II aminoacyl-tRNA synthetase family. Homodimer. Mg(2+) is required as a cofactor.

The protein resides in the cytoplasm. The enzyme catalyses tRNA(Lys) + L-lysine + ATP = L-lysyl-tRNA(Lys) + AMP + diphosphate. In Escherichia coli (strain K12), this protein is Lysine--tRNA ligase (lysS).